Reading from the N-terminus, the 447-residue chain is MFILSSSSSLPSPLSLSSSRVSLPPPSSSSLNLLPLSPHFQPPNLACSCSVASRSTAELLHDFKHSAHTAASADEARNHLPHSRAFLDVRSEQELLSYIRREAEAGKLPSNVAAGMEELYQNYKNAVLKSGNPKADEIVLSNMTVALDRILLDVEEPFVFSPHHKAVREPFDYYTFGQNYVRPLIDFGNSFVGNPFLFKDIEEKLHQGHNVVLISNHQTEADPAIISLLLEKTSPYIAENMIYVAGDRVIVDPLCKPFSIGRNLICVYSKKHMFDIPELAETKRKANTRSLKEMALLLRGGSQLIWIAPSGGRDRLDPSSGEWLPAPFDASSMDNMRRLIQHSGVPGHLCPLALLCYDIMPPPSKVEIEIGEKRVISFNGVGLSLAPAISFEAIAATHRNPDEAREAYSKALFDSVSMQYNVLKAAIYGRQALRASTADVSLSQPWI.

The interval 1–21 (MFILSSSSSLPSPLSLSSSRV) is disordered. The transit peptide at 1–48 (MFILSSSSSLPSPLSLSSSRVSLPPPSSSSLNLLPLSPHFQPPNLACS) directs the protein to the chloroplast. An HXXXXD motif motif is present at residues 217-222 (HQTEAD).

It belongs to the GPAT/DAPAT family.

It is found in the plastid. Its subcellular location is the chloroplast stroma. It catalyses the reaction a fatty acyl-[ACP] + sn-glycerol 3-phosphate = a 1-acyl-sn-glycero-3-phosphate + holo-[ACP]. It carries out the reaction sn-glycerol 3-phosphate + an acyl-CoA = a 1-acyl-sn-glycero-3-phosphate + CoA. It functions in the pathway phospholipid metabolism; CDP-diacylglycerol biosynthesis; CDP-diacylglycerol from sn-glycerol 3-phosphate: step 1/3. Its function is as follows. Esterifies the acyl-group from acyl-acyl carrier proteins (acyl-ACPs) to the sn-1 position of glycerol-3-phosphate. The physiological acyl donors in chloroplasts are acyl-ACPs, but acyl-CoAs are used as artificial donor for in vitro reactions. The enzyme from chilling-resistant plants discriminates against non-fluid palmitic acid and selects oleic acid whereas the enzyme from sensitive plants accepts both fatty acids. Squash is chilling-sensitive. Preferably utilizes oleoyl groups (18:1-ACP) and has lower affinity to palmitoyl (16:0-ACP) and stearoyl groups (18:0-ACP). The protein is Glycerol-3-phosphate acyltransferase ATS11, chloroplastic of Cucurbita moschata (Winter crookneck squash).